A 443-amino-acid chain; its full sequence is Protein king tubby (443 aa).

2 disordered regions span residues 57-80 (TNGSPGGINSVAMNTSRNHSNNMR) and 98-191 (HELE…EGDV). Positions 67 to 80 (VAMNTSRNHSNNMR) are enriched in polar residues. Positions 113–128 (QQQQSASHSANSTQSQ) are enriched in low complexity. At S136 the chain carries Phosphoserine. The segment covering 177–186 (NGTGNGTGGE) has biased composition (gly residues).

It belongs to the TUB family.

It is found in the cytoplasm. The protein resides in the nucleus. It localises to the cell projection. Its subcellular location is the cilium membrane. The protein localises to the rhabdomere. This is Protein king tubby from Drosophila sechellia (Fruit fly).